The chain runs to 546 residues: Probable bifunctional SAT/APS kinase (546 aa).

The tract at residues 1-370 (MEKIKYLKSI…LAETYVPKHK (370 aa)) is sulfate adenylyltransferase. The adenylsulfate kinase stretch occupies residues 371 to 546 (QGFCVWLTGL…FLKKEGFIKD (176 aa)). Position 379-386 (379-386 (GLPCAGKS)) interacts with ATP. Catalysis depends on Ser453, which acts as the Phosphoserine intermediate.

It in the N-terminal section; belongs to the sulfate adenylyltransferase family. The protein in the C-terminal section; belongs to the APS kinase family.

It carries out the reaction sulfate + ATP + H(+) = adenosine 5'-phosphosulfate + diphosphate. The catalysed reaction is adenosine 5'-phosphosulfate + ATP = 3'-phosphoadenylyl sulfate + ADP + H(+). The protein operates within sulfur metabolism; hydrogen sulfide biosynthesis; sulfite from sulfate: step 1/3. It functions in the pathway sulfur metabolism; hydrogen sulfide biosynthesis; sulfite from sulfate: step 2/3. In Aquifex aeolicus (strain VF5), this protein is Probable bifunctional SAT/APS kinase (sat/cysC).